The following is a 307-amino-acid chain: Ribonuclease Z (307 aa).

Positions 63, 65, 67, 68, 143, 213, and 271 each coordinate Zn(2+). The active-site Proton acceptor is Asp67.

The protein belongs to the RNase Z family. Homodimer. It depends on Zn(2+) as a cofactor.

It catalyses the reaction Endonucleolytic cleavage of RNA, removing extra 3' nucleotides from tRNA precursor, generating 3' termini of tRNAs. A 3'-hydroxy group is left at the tRNA terminus and a 5'-phosphoryl group is left at the trailer molecule.. Zinc phosphodiesterase, which displays some tRNA 3'-processing endonuclease activity. Probably involved in tRNA maturation, by removing a 3'-trailer from precursor tRNA. The protein is Ribonuclease Z of Lactococcus lactis subsp. lactis (strain IL1403) (Streptococcus lactis).